Consider the following 334-residue polypeptide: L-lactate dehydrogenase (334 aa).

Residues 1–22 (MASTKGKLIHEMVPSKERDPPH) form a disordered region. Residues 8 to 22 (LIHEMVPSKERDPPH) are compositionally biased toward basic and acidic residues. Residues 31-59 (GQVG…VEDR) and Arg-101 each bind NAD(+). The substrate site is built by Arg-108, Asn-140, and Arg-171. Asn-140 lines the NAD(+) pocket. His-195 serves as the catalytic Proton acceptor. Thr-250 is a substrate binding site.

It belongs to the LDH/MDH superfamily. LDH family. As to quaternary structure, homotetramer.

The protein resides in the cytoplasm. The enzyme catalyses (S)-lactate + NAD(+) = pyruvate + NADH + H(+). The protein operates within fermentation; pyruvate fermentation to lactate; (S)-lactate from pyruvate: step 1/1. The protein is L-lactate dehydrogenase of Petromyzon marinus (Sea lamprey).